Reading from the N-terminus, the 309-residue chain is Tagatose-6-phosphate kinase (309 aa).

It belongs to the carbohydrate kinase PfkB family. LacC subfamily.

It catalyses the reaction D-tagatofuranose 6-phosphate + ATP = D-tagatofuranose 1,6-bisphosphate + ADP + H(+). It functions in the pathway carbohydrate metabolism; D-tagatose 6-phosphate degradation; D-glyceraldehyde 3-phosphate and glycerone phosphate from D-tagatose 6-phosphate: step 1/2. The polypeptide is Tagatose-6-phosphate kinase (Streptococcus pyogenes serotype M12 (strain MGAS2096)).